We begin with the raw amino-acid sequence, 118 residues long: Large ribosomal subunit protein bL20 (118 aa).

The protein belongs to the bacterial ribosomal protein bL20 family.

Binds directly to 23S ribosomal RNA and is necessary for the in vitro assembly process of the 50S ribosomal subunit. It is not involved in the protein synthesizing functions of that subunit. This chain is Large ribosomal subunit protein bL20, found in Rhodopirellula baltica (strain DSM 10527 / NCIMB 13988 / SH1).